Here is a 309-residue protein sequence, read N- to C-terminus: Putative lipid kinase YtlR (309 aa).

The 134-residue stretch at 1 to 134 (MSHWFFIINP…FHLGSVNFLQ (134 aa)) folds into the DAGKc domain. Residues 9-13 (NPTAG), Thr-40, and 69-75 (GDGTMHE) contribute to the ATP site. Mg(2+)-binding residues include Asn-229, Glu-232, and Thr-234. Glu-289 functions as the Proton acceptor in the catalytic mechanism.

The protein belongs to the diacylglycerol/lipid kinase family. The cofactor is Mg(2+).

In terms of biological role, may catalyze the ATP-dependent phosphorylation of lipids other than diacylglycerol (DAG). In fact, is not able to exhibit diacylglycerol kinase activity in vitro. The sequence is that of Putative lipid kinase YtlR (ytlR) from Bacillus subtilis (strain 168).